A 248-amino-acid chain; its full sequence is 7-cyano-7-deazaguanine synthase (248 aa).

22–32 serves as a coordination point for ATP; sequence LSGGLDSTTCL. Zn(2+) contacts are provided by cysteine 216, cysteine 225, cysteine 228, and cysteine 231.

Belongs to the QueC family. Zn(2+) serves as cofactor.

It carries out the reaction 7-carboxy-7-deazaguanine + NH4(+) + ATP = 7-cyano-7-deazaguanine + ADP + phosphate + H2O + H(+). It participates in purine metabolism; 7-cyano-7-deazaguanine biosynthesis. In terms of biological role, catalyzes the ATP-dependent conversion of 7-carboxy-7-deazaguanine (CDG) to 7-cyano-7-deazaguanine (preQ(0)). The sequence is that of 7-cyano-7-deazaguanine synthase from Leptospira biflexa serovar Patoc (strain Patoc 1 / Ames).